Reading from the N-terminus, the 283-residue chain is Protein/nucleic acid deglycase HchA (283 aa).

His86, Glu91, and His123 together coordinate Zn(2+). The Nucleophile role is filled by Cys185.

This sequence belongs to the peptidase C56 family. HchA subfamily. As to quaternary structure, homodimer.

It is found in the cytoplasm. It catalyses the reaction N(omega)-(1-hydroxy-2-oxopropyl)-L-arginyl-[protein] + H2O = lactate + L-arginyl-[protein] + H(+). It carries out the reaction N(6)-(1-hydroxy-2-oxopropyl)-L-lysyl-[protein] + H2O = lactate + L-lysyl-[protein] + H(+). The enzyme catalyses S-(1-hydroxy-2-oxopropyl)-L-cysteinyl-[protein] + H2O = lactate + L-cysteinyl-[protein] + H(+). The catalysed reaction is N(omega)-(1-hydroxy-2-oxoethyl)-L-arginyl-[protein] + H2O = L-arginyl-[protein] + glycolate + H(+). It catalyses the reaction N(6)-(1-hydroxy-2-oxoethyl)-L-lysyl-[protein] + H2O = glycolate + L-lysyl-[protein] + H(+). It carries out the reaction S-(1-hydroxy-2-oxoethyl)-L-cysteinyl-[protein] + H2O = glycolate + L-cysteinyl-[protein] + H(+). The enzyme catalyses N(2)-(1-hydroxy-2-oxopropyl)-dGTP + H2O = lactate + dGTP + H(+). The catalysed reaction is N(2)-(1-hydroxy-2-oxopropyl)-GTP + H2O = lactate + GTP + H(+). It catalyses the reaction N(2)-(1-hydroxy-2-oxopropyl)-GDP + H2O = lactate + GDP + H(+). It carries out the reaction N(2)-(1-hydroxy-2-oxopropyl)-GMP + H2O = lactate + GMP + H(+). The enzyme catalyses N(2)-(1-hydroxy-2-oxoethyl)-dGTP + H2O = dGTP + glycolate + H(+). The catalysed reaction is N(2)-(1-hydroxy-2-oxoethyl)-GTP + H2O = glycolate + GTP + H(+). It catalyses the reaction N(2)-(1-hydroxy-2-oxoethyl)-GDP + H2O = glycolate + GDP + H(+). It carries out the reaction N(2)-(1-hydroxy-2-oxoethyl)-GMP + H2O = glycolate + GMP + H(+). The enzyme catalyses an N(2)-(1-hydroxy-2-oxopropyl)-guanosine in RNA + H2O = a guanosine in RNA + lactate + H(+). The catalysed reaction is an N(2)-(1-hydroxy-2-oxopropyl)-2'-deoxyguanosine in DNA + H2O = a 2'-deoxyguanosine in DNA + lactate + H(+). It catalyses the reaction an N(2)-(1-hydroxy-2-oxoethyl)-guanosine in RNA + H2O = a guanosine in RNA + glycolate + H(+). It carries out the reaction an N(2)-(1-hydroxy-2-oxoethyl)-2'-deoxyguanosine in DNA + H2O = a 2'-deoxyguanosine in DNA + glycolate + H(+). Functionally, protein and nucleotide deglycase that catalyzes the deglycation of the Maillard adducts formed between amino groups of proteins or nucleotides and reactive carbonyl groups of glyoxals. Thus, functions as a protein deglycase that repairs methylglyoxal- and glyoxal-glycated proteins, and releases repaired proteins and lactate or glycolate, respectively. Deglycates cysteine, arginine and lysine residues in proteins, and thus reactivates these proteins by reversing glycation by glyoxals. Acts on early glycation intermediates (hemithioacetals and aminocarbinols), preventing the formation of Schiff bases and advanced glycation endproducts (AGE). Also functions as a nucleotide deglycase able to repair glycated guanine in the free nucleotide pool (GTP, GDP, GMP, dGTP) and in DNA and RNA. Is thus involved in a major nucleotide repair system named guanine glycation repair (GG repair), dedicated to reversing methylglyoxal and glyoxal damage via nucleotide sanitization and direct nucleic acid repair. Plays an important role in protecting cells from carbonyl stress. The protein is Protein/nucleic acid deglycase HchA of Escherichia coli O8 (strain IAI1).